An 87-amino-acid chain; its full sequence is Kappa-3-bungarotoxin (87 aa).

A signal peptide spans 1–21; the sequence is MKTLLLSLVVVTIVCLDLGYT. Cystine bridges form between C24–C42, C35–C63, C48–C52, C67–C79, and C80–C85.

This sequence belongs to the three-finger toxin family. Long-chain subfamily. Kappa-neurotoxin sub-subfamily. As to quaternary structure, homodimer and heterodimer with kappa 2-bungarotoxin; non-covalently-linked. Expressed by the venom gland.

The protein localises to the secreted. In terms of biological role, postsynaptic neurotoxin that binds and inhibits neuronal nicotinic acetylcholine receptors (nAChR) with high affinity (IC(50)&lt;100 nM). Is a selective, and slowly reversible antagonist of alpha-3/CHRNA3-containing and some alpha-4/CHRNA4-containing AChRs. The chain is Kappa-3-bungarotoxin from Bungarus multicinctus (Many-banded krait).